The sequence spans 596 residues: Fructan 1-exohydrolase w3 (596 aa).

Residues 1-20 (MAQAWAFLLPVLVLGSYVTS) form the signal peptide. Residue D75 is part of the active site. N-linked (GlcNAc...) asparagine glycans are attached at residues N168, N236, and N248. The cysteines at positions 446 and 492 are disulfide-linked.

The protein belongs to the glycosyl hydrolase 32 family. As to expression, expressed in the stem, particularly the penultimate internode. Little expression is detected in roots and in the peduncle part of the stem.

It catalyses the reaction Hydrolysis of terminal, non-reducing (2-&gt;1)-linked beta-D-fructofuranose residues in fructans.. Inhibited by sucrose. Hydrolyzes inulin-type beta-(2,1)-fructans and beta-(2,1)-linkages in branched fructans. Has low activity against beta-(2,6)-linked fructans. May play a role as a beta-(2,1)-trimmer during graminan biosynthesis. This is Fructan 1-exohydrolase w3 from Triticum aestivum (Wheat).